The primary structure comprises 655 residues: Alpha-L-iduronidase (655 aa).

The N-terminal stretch at 1–25 (MRPPGPRAPGLALLAALLAAPRALA) is a signal peptide. 3 residues coordinate alpha-D-mannopyranose: P53, L55, and H57. Residue H90 participates in alpha-L-iduronate binding. N109 carries an N-linked (GlcNAc...) asparagine glycan. The alpha-L-iduronate site is built by N180 and E181. The active-site Proton donor is the E181. 2 N-linked (GlcNAc...) asparagine glycosylation sites follow: N189 and N242. The alpha-L-iduronate site is built by K263, E298, and G304. Residue E298 is the Nucleophile of the active site. Residue W305 participates in alpha-D-mannopyranose binding. N-linked (GlcNAc...) asparagine glycosylation is present at N335. Alpha-L-iduronate contacts are provided by D348 and R362. Residues N371 and N414 are each glycosylated (N-linked (GlcNAc...) asparagine). The cysteines at positions 540 and 576 are disulfide-linked.

This sequence belongs to the glycosyl hydrolase 39 family. In terms of assembly, monomer. In terms of processing, a smaller 63 kDa protein probably arises from IDUA protein by proteolytic cleavage. Post-translationally, N-glycosylation contributes to substrate binding and is required for full enzymatic activity. In terms of tissue distribution, detected in testis (at protein level). Expressed ubiquitously.

Its subcellular location is the lysosome. It catalyses the reaction Hydrolysis of unsulfated alpha-L-iduronosidic linkages in dermatan sulfate.. The chain is Alpha-L-iduronidase (IDUA) from Canis lupus familiaris (Dog).